A 2346-amino-acid polypeptide reads, in one-letter code: Acetyl-CoA carboxylase 1 (2346 aa).

N-acetylmethionine is present on M1. S5, S23, S25, S29, S34, S48, S50, and S53 each carry phosphoserine. T58 carries the post-translational modification Phosphothreonine. The residue at position 78 (S78) is a Phosphoserine. S80 is subject to Phosphoserine; by AMPK. A Biotin carboxylation domain is found at 117–618; the sequence is VIEKVLIANN…DTGWLDRLIA (502 aa). In terms of domain architecture, ATP-grasp spans 275-466; sequence SKRILNVPQE…LPAAQLQIAM (192 aa). Residue 315-320 participates in ATP binding; it reads GGGGKG. E424, E437, and N439 together coordinate Mg(2+). The Mn(2+) site is built by E424, E437, and N439. Residue R441 is part of the active site. T610 is subject to Phosphothreonine. One can recognise a Biotinyl-binding domain in the interval 745 to 819; that stretch reads FEKENDPSVL…DPGCVIAKMQ (75 aa). Residue K786 is modified to N6-biotinyllysine. Phosphoserine is present on residues S835, S1201, S1216, and S1218. Phosphothreonine is present on T1227. Phosphoserine occurs at positions 1259, 1263, and 1273. K1334 is subject to N6-acetyllysine. In terms of domain architecture, CoA carboxyltransferase N-terminal spans 1576–1914; sequence PYVTKDLLQS…SVYSSVPLLN (339 aa). A carboxyltransferase region spans residues 1576-2234; the sequence is PYVTKDLLQS…EDLVKKKIHN (659 aa). Positions 1823, 2127, and 2129 each coordinate CoA. Residues 1918–2234 form the CoA carboxyltransferase C-terminal domain; the sequence is PIDRVIEFVP…EDLVKKKIHN (317 aa). T2153 carries the post-translational modification Phosphothreonine.

In terms of assembly, monomer, homodimer, and homotetramer. Can form filamentous polymers. Interacts in its inactive phosphorylated form with the BRCT domains of BRCA1 which prevents ACACA dephosphorylation and inhibits lipid synthesis. Interacts with MID1IP1; interaction with MID1IP1 promotes oligomerization and increases its activity. Mg(2+) is required as a cofactor. Mn(2+) serves as cofactor. Requires biotin as cofactor. Post-translationally, phosphorylation on Ser-1263 is required for interaction with BRCA1. In terms of processing, phosphorylation at Ser-80 by AMPK inactivates enzyme activity. The biotin cofactor is covalently attached to the central biotinyl-binding domain and is required for the catalytic activity. Expressed at high levels in mammary gland.

It is found in the cytoplasm. The protein resides in the cytosol. It catalyses the reaction hydrogencarbonate + acetyl-CoA + ATP = malonyl-CoA + ADP + phosphate + H(+). The protein operates within lipid metabolism; malonyl-CoA biosynthesis; malonyl-CoA from acetyl-CoA: step 1/1. With respect to regulation, inhibited by phosphorylation. Citrate promotes oligomerization of the protein into filaments that correspond to the most active form of the carboxylase. In terms of biological role, cytosolic enzyme that catalyzes the carboxylation of acetyl-CoA to malonyl-CoA, the first and rate-limiting step of de novo fatty acid biosynthesis. This is a 2 steps reaction starting with the ATP-dependent carboxylation of the biotin carried by the biotin carboxyl carrier (BCC) domain followed by the transfer of the carboxyl group from carboxylated biotin to acetyl-CoA. This is Acetyl-CoA carboxylase 1 from Ovis aries (Sheep).